Consider the following 63-residue polypeptide: Large ribosomal subunit protein bL28 (63 aa).

The protein belongs to the bacterial ribosomal protein bL28 family.

This Brachyspira hyodysenteriae (strain ATCC 49526 / WA1) protein is Large ribosomal subunit protein bL28.